We begin with the raw amino-acid sequence, 274 residues long: Protein TIC 20-I, chloroplastic (274 aa).

A chloroplast-targeting transit peptide spans 1–65; it reads MITGYSTPSA…ELPRVSRGVP (65 aa). 4 consecutive transmembrane segments (helical) span residues 130-152, 167-187, 200-220, and 229-249; these read LPYL…LHPF, IGRL…LGIV, VVMG…SKWM, and FGMH…LESI.

Belongs to the Tic20 family. Part of the Tic complex. Component of the 1-MD complex, composed of TIC20-I, TIC214, TIC100 and TIC56. Interacts with the translocating preproteins. Hydrolysis of ATP is essential for the formation of this complex. The 1-MD complex interacts with TIC21. As to expression, expressed in leaves, shoots and roots. High expression in mature photosynthetic tissues. Lower levels in non-photosynthetic tissues and roots.

It localises to the plastid. The protein resides in the chloroplast inner membrane. In terms of biological role, involved in protein precursor import into chloroplasts. May be part of an intermediate translocation complex acting as a protein-conducting channel at the inner envelope. Seems to be specific for photosynthesis-related pre-proteins. Partially redundant with TIC20-IV, but not with TIC20-II or TIC20-V. This chain is Protein TIC 20-I, chloroplastic, found in Arabidopsis thaliana (Mouse-ear cress).